A 314-amino-acid chain; its full sequence is Methionyl-tRNA formyltransferase (314 aa).

(6S)-5,6,7,8-tetrahydrofolate is bound at residue 110 to 113; the sequence is SLLP.

It belongs to the Fmt family.

It carries out the reaction L-methionyl-tRNA(fMet) + (6R)-10-formyltetrahydrofolate = N-formyl-L-methionyl-tRNA(fMet) + (6S)-5,6,7,8-tetrahydrofolate + H(+). Its function is as follows. Attaches a formyl group to the free amino group of methionyl-tRNA(fMet). The formyl group appears to play a dual role in the initiator identity of N-formylmethionyl-tRNA by promoting its recognition by IF2 and preventing the misappropriation of this tRNA by the elongation apparatus. In Lactobacillus johnsonii (strain CNCM I-12250 / La1 / NCC 533), this protein is Methionyl-tRNA formyltransferase.